The primary structure comprises 194 residues: Endoribonuclease YbeY (194 aa).

Zn(2+) is bound by residues His-151, His-155, and His-161.

The protein belongs to the endoribonuclease YbeY family. Zn(2+) serves as cofactor.

The protein localises to the cytoplasm. Single strand-specific metallo-endoribonuclease involved in late-stage 70S ribosome quality control and in maturation of the 3' terminus of the 16S rRNA. The protein is Endoribonuclease YbeY of Gloeobacter violaceus (strain ATCC 29082 / PCC 7421).